The primary structure comprises 209 residues: Translation initiation factor 2 subunit beta (209 aa).

The TRAM domain maps to Thr-144–Glu-202.

This sequence belongs to the eIF-2-beta/eIF-5 family. As to quaternary structure, heterotrimer composed of an alpha, a beta and a gamma chain.

Functionally, eIF-2 functions in the early steps of protein synthesis by forming a ternary complex with GTP and initiator tRNA. The chain is Translation initiation factor 2 subunit beta (eif2b) from Thermoplasma acidophilum (strain ATCC 25905 / DSM 1728 / JCM 9062 / NBRC 15155 / AMRC-C165).